Consider the following 845-residue polypeptide: Putative DEAD-box ATP-dependent RNA helicase 29 (845 aa).

The short motif at 28-56 (GGFESLNLGPNVFNAIKKKGYKVPTPIQR) is the Q motif element. A Helicase ATP-binding domain is found at 59-232 (MPLILSGVDV…KAGLREPQLV (174 aa)). 72 to 79 (ARTGSGKT) serves as a coordination point for ATP. Positions 180-183 (DEAD) match the DEAD box motif. Residues 256–411 (KYSALLYLVR…EVLKNMEEVM (156 aa)) enclose the Helicase C-terminal domain. Positions 675–845 (SGKIKTESGA…GGGGKRGRGR (171 aa)) are disordered. Basic and acidic residues-rich tracts occupy residues 696–716 (RWQE…DETT) and 738–754 (VRSE…ERQQ). The span at 770–799 (GGRGGARGGRGGGARGGRGGSRDFGGGGRD) shows a compositional bias: gly residues. Over residues 806-817 (RGGRSGGRDFGG) the composition is skewed to basic and acidic residues. Residues 828–845 (GGKRGGGRGGGGKRGRGR) are compositionally biased toward basic residues.

This sequence belongs to the DEAD box helicase family. DDX54/DBP10 subfamily.

It catalyses the reaction ATP + H2O = ADP + phosphate + H(+). This Arabidopsis thaliana (Mouse-ear cress) protein is Putative DEAD-box ATP-dependent RNA helicase 29 (RH29).